We begin with the raw amino-acid sequence, 451 residues long: Chromosomal replication initiator protein DnaA (451 aa).

The interval 1 to 73 is domain I, interacts with DnaA modulators; sequence MNAHPKEIWE…IRSLQMVTSQ (73 aa). The tract at residues 73 to 112 is domain II; that stretch reads QKYNVKFLISSELPEEFLTLDTINEQNIKGSIIVSDEMSA. Residues 113–329 are domain III, AAA+ region; that stretch reads MLNPKYTFTS…GALIRIVAFS (217 aa). 4 residues coordinate ATP: glycine 157, glycine 159, lysine 160, and threonine 161. The interval 330–451 is domain IV, binds dsDNA; it reads SLTNKEISVD…NDLTKRLDQQ (122 aa).

Belongs to the DnaA family. As to quaternary structure, oligomerizes as a right-handed, spiral filament on DNA at oriC.

It is found in the cytoplasm. Functionally, plays an essential role in the initiation and regulation of chromosomal replication. ATP-DnaA binds to the origin of replication (oriC) to initiate formation of the DNA replication initiation complex once per cell cycle. Binds the DnaA box (a 9 base pair repeat at the origin) and separates the double-stranded (ds)DNA. Forms a right-handed helical filament on oriC DNA; dsDNA binds to the exterior of the filament while single-stranded (ss)DNA is stabiized in the filament's interior. The ATP-DnaA-oriC complex binds and stabilizes one strand of the AT-rich DNA unwinding element (DUE), permitting loading of DNA polymerase. After initiation quickly degrades to an ADP-DnaA complex that is not apt for DNA replication. Binds acidic phospholipids. The sequence is that of Chromosomal replication initiator protein DnaA from Clostridium kluyveri (strain NBRC 12016).